Reading from the N-terminus, the 446-residue chain is MNAQEANFDGLVGPTHNYAGLSFGNVASLNNEKSAANPKAAAKQGLRKMKQLADLGFAQGVLPPQERPSLRLLRELGFSGKDADVIAKAAKQAPELLAAASSASAMWTANAATVSPSADTSDGRVHFTPANLCSKLHRAIEHEATRRTLSTLFADPAHFAVHEALTGTPALGDEGAANHTRFCAEYGKPGIEFFVYGRAEYRRGPEPKRFPARQTFEASRAVAHRHGLAEEATVYAQQDPDVIDAGVFHNDVISVGNRDTLFTHERAFVNKQAIYDTLTAALDARGARLNVIEVPDAAVSVNDAVTSYLFNSQLLSRADGSQVLVVPQECRENANVAAYLDQLAAGNGPIHDVLVFDLRESMKNGGGPACLRLRVVLNEAERAAVTSNVWINDTLFASLDAWIDKHYRDRLAPEDLADPALLDESRTALDELTQILRVGSLYDFQR.

Substrate-binding positions include 19–28 (AGLSFGNVAS), Asn110, and 137–138 (HR). Glu174 is an active-site residue. Arg213 provides a ligand contact to substrate. His249 is a catalytic residue. Asp251 and Asn364 together coordinate substrate. Catalysis depends on Cys370, which acts as the Nucleophile.

This sequence belongs to the succinylarginine dihydrolase family. In terms of assembly, homodimer.

The catalysed reaction is N(2)-succinyl-L-arginine + 2 H2O + 2 H(+) = N(2)-succinyl-L-ornithine + 2 NH4(+) + CO2. It participates in amino-acid degradation; L-arginine degradation via AST pathway; L-glutamate and succinate from L-arginine: step 2/5. Functionally, catalyzes the hydrolysis of N(2)-succinylarginine into N(2)-succinylornithine, ammonia and CO(2). The polypeptide is N-succinylarginine dihydrolase (Burkholderia cenocepacia (strain ATCC BAA-245 / DSM 16553 / LMG 16656 / NCTC 13227 / J2315 / CF5610) (Burkholderia cepacia (strain J2315))).